Here is a 324-residue protein sequence, read N- to C-terminus: Germ cell-specific gene 1 protein (324 aa).

4 helical membrane passes run 15 to 35 (TFIS…SLLS), 127 to 147 (LSLG…LLLL), 164 to 184 (AFAA…HMLY), and 208 to 228 (WAFY…VTTF).

This sequence belongs to the GSG1 family. As to quaternary structure, interacts with PAPOLB. In terms of tissue distribution, expressed in spermatogenic cells (at protein level). Expressed in germ cells within the testis from day 21 onwards.

The protein localises to the endoplasmic reticulum membrane. Its function is as follows. May cause the redistribution of PAPOLB from the cytosol to the endoplasmic reticulum. The sequence is that of Germ cell-specific gene 1 protein (Gsg1) from Mus musculus (Mouse).